The sequence spans 252 residues: Flagellar L-ring protein (252 aa).

A signal peptide spans M1–G25. C26 is lipidated: N-palmitoyl cysteine. C26 is lipidated: S-diacylglycerol cysteine.

The protein belongs to the FlgH family. As to quaternary structure, the basal body constitutes a major portion of the flagellar organelle and consists of four rings (L,P,S, and M) mounted on a central rod.

The protein localises to the cell outer membrane. Its subcellular location is the bacterial flagellum basal body. Assembles around the rod to form the L-ring and probably protects the motor/basal body from shearing forces during rotation. The polypeptide is Flagellar L-ring protein (Rhodopseudomonas palustris (strain ATCC BAA-98 / CGA009)).